A 443-amino-acid chain; its full sequence is Glutamine synthetase (443 aa).

The region spanning 16–97 (KRIKFVQLIF…VYGYIYKDGK (82 aa)) is the GS beta-grasp domain. Positions 103–443 (PRGVLRRTLE…EWELERYFFI (341 aa)) constitute a GS catalytic domain. Mg(2+)-binding residues include E126 and E128. An ATP-binding site is contributed by E176. Residues E181 and E188 each coordinate Mg(2+). G233 serves as a coordination point for L-glutamate. H237 contacts Mg(2+). ATP is bound by residues 239 to 241 (HIS) and S241. L-glutamate contacts are provided by R287, E293, and R305. R305 and R310 together coordinate ATP. A Mg(2+)-binding site is contributed by E322. R324 is an L-glutamate binding site.

Belongs to the glutamine synthetase family. As to quaternary structure, oligomer of 12 subunits arranged in the form of two hexagons. Mg(2+) is required as a cofactor.

The protein localises to the cytoplasm. It catalyses the reaction L-glutamate + NH4(+) + ATP = L-glutamine + ADP + phosphate + H(+). Probably involved in nitrogen metabolism via ammonium assimilation. Catalyzes the ATP-dependent biosynthesis of glutamine from glutamate and ammonia. The protein is Glutamine synthetase of Pyrococcus horikoshii (strain ATCC 700860 / DSM 12428 / JCM 9974 / NBRC 100139 / OT-3).